We begin with the raw amino-acid sequence, 657 residues long: Glycogen debranching enzyme (657 aa).

Residue aspartate 336 is the Nucleophile of the active site. The Proton donor role is filled by glutamate 371. Positions 458–467 (NEANGEENRD) are enriched in basic and acidic residues. The disordered stretch occupies residues 458-479 (NEANGEENRDGTNNNYSNNHGK).

It belongs to the glycosyl hydrolase 13 family.

It catalyses the reaction Hydrolysis of (1-&gt;6)-alpha-D-glucosidic linkages to branches with degrees of polymerization of three or four glucose residues in limit dextrin.. It functions in the pathway glycan degradation; glycogen degradation. Functionally, removes maltotriose and maltotetraose chains that are attached by 1,6-alpha-linkage to the limit dextrin main chain, generating a debranched limit dextrin. The sequence is that of Glycogen debranching enzyme from Shigella boydii serotype 18 (strain CDC 3083-94 / BS512).